A 180-amino-acid chain; its full sequence is Protein sll1483 (180 aa).

Residues 1-26 (MKTAARIVAFTALTGFALGMPTVAMA) form the signal peptide. The 132-residue stretch at 45-176 (AMTIVEVAAG…GVIHVIDQVI (132 aa)) folds into the FAS1 domain.

This is Protein sll1483 from Synechocystis sp. (strain ATCC 27184 / PCC 6803 / Kazusa).